The chain runs to 326 residues: tRNA uridine(34) hydroxylase (326 aa).

Residues 122-218 (EENRCLVLDV…YGQAVGTGKW (97 aa)) enclose the Rhodanese domain. Cysteine 178 serves as the catalytic Cysteine persulfide intermediate.

The protein belongs to the TrhO family.

It catalyses the reaction uridine(34) in tRNA + AH2 + O2 = 5-hydroxyuridine(34) in tRNA + A + H2O. Catalyzes oxygen-dependent 5-hydroxyuridine (ho5U) modification at position 34 in tRNAs. The sequence is that of tRNA uridine(34) hydroxylase from Chlamydia abortus (strain DSM 27085 / S26/3) (Chlamydophila abortus).